We begin with the raw amino-acid sequence, 379 residues long: Carboxypeptidase Y-deficient protein 8 (379 aa).

The segment covering 84 to 107 (HGSGNSSSKKVTSSTSSSSSNGSV) has biased composition (low complexity). The tract at residues 84–108 (HGSGNSSSKKVTSSTSSSSSNGSVD) is disordered. Phosphoserine is present on S216.

This sequence belongs to the VPS26 family. Component of the retromer complex which consists of VPS29, VPS26, VPS35, VPS5 and VPS17. Component of a retromer subcomplex consisting of VPS29, VPS26 and VPS35.

Functionally, plays a role in vesicular protein sorting. Required for the endosome-to-Golgi retrieval of the vacuolar protein sorting receptor VPS10. Component of the membrane-associated retromer complex which is essential in endosome-to-Golgi retrograde transport. The VPS29-VPS26-VPS35 subcomplex may be involved in cargo selection. The sequence is that of Carboxypeptidase Y-deficient protein 8 (PEP8) from Saccharomyces cerevisiae (strain ATCC 204508 / S288c) (Baker's yeast).